Here is a 405-residue protein sequence, read N- to C-terminus: L-rhamnonate dehydratase (405 aa).

Substrate is bound by residues His-33 and Arg-59. Residues Asp-226, Glu-252, and Glu-280 each contribute to the Mg(2+) site. The Proton acceptor role is filled by His-329. Glu-349 contacts substrate.

This sequence belongs to the mandelate racemase/muconate lactonizing enzyme family. RhamD subfamily. Homooctamer; tetramer of dimers. The cofactor is Mg(2+).

It carries out the reaction L-rhamnonate = 2-dehydro-3-deoxy-L-rhamnonate + H2O. In terms of biological role, catalyzes the dehydration of L-rhamnonate to 2-keto-3-deoxy-L-rhamnonate (KDR). This is L-rhamnonate dehydratase from Escherichia coli O9:H4 (strain HS).